A 106-amino-acid polypeptide reads, in one-letter code: Glutaredoxin-1 (106 aa).

Ala2 is subject to N-acetylalanine. Residues 3–106 enclose the Glutaredoxin domain; the sequence is QAFVNSKIQP…TRLQQIGALK (104 aa). Lys9 bears the N6-succinyllysine mark. Disulfide bonds link Cys23–Cys26 and Cys79–Cys83.

This sequence belongs to the glutaredoxin family.

The protein resides in the cytoplasm. Has a glutathione-disulfide oxidoreductase activity in the presence of NADPH and glutathione reductase. Reduces low molecular weight disulfides and proteins. This chain is Glutaredoxin-1 (GLRX), found in Sus scrofa (Pig).